The sequence spans 382 residues: Protein-arginine rhamnosyltransferase (382 aa).

Residue 18 to 19 (FG) participates in dTDP binding. Aspartate 20 functions as the Proton acceptor in the catalytic mechanism. DTDP-beta-L-rhamnose-binding positions include aspartate 20, tyrosine 187, 250-252 (VPQ), and 268-272 (RGEDS). DTDP is bound by residues tyrosine 187, 250–252 (VPQ), and 268–272 (RGEDS). Glutamate 270 is an active-site residue.

It belongs to the glycosyltransferase 104 family.

The enzyme catalyses dTDP-beta-L-rhamnose + L-arginyl-[protein] = N(omega)-(alpha-L-rhamnosyl)-L-arginyl-[protein] + dTDP + H(+). Its function is as follows. Protein-arginine rhamnosyltransferase that catalyzes the transfer of a single rhamnose to elongation factor P (EF-P) on 'Lys-32', a modification required for EF-P-dependent rescue of polyproline stalled ribosomes. The chain is Protein-arginine rhamnosyltransferase from Neisseria meningitidis serogroup B / serotype 15 (strain H44/76).